The sequence spans 685 residues: Exocyst complex component 8 (685 aa).

One can recognise a PH domain in the interval 151–251 (YLVYNGDLTE…WLEILEQTKK (101 aa)). Residues 254–263 (ALNEKQKQEE) show a composition bias toward basic and acidic residues. The interval 254 to 273 (ALNEKQKQEETTPQLPVVPE) is disordered.

The protein belongs to the EXO84 family. In terms of assembly, the exocyst complex is composed of exoc1, exoc2, exoc3, exoc4, exoc5, exoc6, exoc7 and exoc8.

It is found in the cytoplasm. The protein localises to the perinuclear region. The protein resides in the cell projection. Its subcellular location is the growth cone. In terms of biological role, component of the exocyst complex involved in the docking of exocytic vesicles with fusion sites on the plasma membrane. This Xenopus laevis (African clawed frog) protein is Exocyst complex component 8 (exoc8).